A 316-amino-acid polypeptide reads, in one-letter code: DNA-directed RNA polymerase III subunit RPC6 (316 aa).

An N-acetylalanine modification is found at alanine 2. Residues lysine 5 and lysine 7 each participate in a glycyl lysine isopeptide (Lys-Gly) (interchain with G-Cter in SUMO2) cross-link. Positions 287, 290, 296, and 307 each coordinate [4Fe-4S] cluster.

It belongs to the eukaryotic RPC34/RPC39 RNA polymerase subunit family. In terms of assembly, component of the RNA polymerase III complex consisting of 17 subunits: a ten-subunit horseshoe-shaped catalytic core composed of POLR3A/RPC1, POLR3B/RPC2, POLR1C/RPAC1, POLR1D/RPAC2, POLR3K/RPC10, POLR2E/RPABC1, POLR2F/RPABC2, POLR2H/RPABC3, POLR2K/RPABC4 and POLR2L/RPABC5; a mobile stalk composed of two subunits POLR3H/RPC8 and CRCP/RPC9, protruding from the core and functioning primarily in transcription initiation; and additional subunits homologous to general transcription factors of the RNA polymerase II machinery, POLR3C/RPC3-POLR3F/RPC6-POLR3G/RPC7 heterotrimer required for transcription initiation and POLR3D/RPC4-POLR3E/RPC5 heterodimer involved in both transcription initiation and termination. Directly interacts with POLR3C. Interacts with TBP and TFIIIB90 and GTF3C4. Interacts with MAF1. As part of the RNA polymerase III complex, interacts with PKP2.

The protein localises to the nucleus. DNA-dependent RNA polymerase catalyzes the transcription of DNA into RNA using the four ribonucleoside triphosphates as substrates. Specific peripheric component of RNA polymerase III (Pol III) which synthesizes small non-coding RNAs including 5S rRNA, snRNAs, tRNAs and miRNAs from at least 500 distinct genomic loci. Part of POLR3C/RPC3-POLR3F/RPC6-POLR3G/RPC7 heterotrimer that coordinates the dynamics of Pol III stalk and clamp modules during the transition from apo to elongation state. Pol III plays a key role in sensing and limiting infection by intracellular bacteria and DNA viruses, including varicella zoster virus. Acts as a nuclear and cytosolic DNA sensor detecting AT-rich DNA, involved in innate immune response. Can sense non-self dsDNA that serves as template for transcription into dsRNA. The non-self RNA polymerase III transcripts, such as Epstein-Barr virus-encoded RNAs (EBERs) induce type I interferon and NF-kappa-B through the RIG-I pathway. Preferentially binds double-stranded DNA (dsDNA). The protein is DNA-directed RNA polymerase III subunit RPC6 of Homo sapiens (Human).